A 322-amino-acid chain; its full sequence is Ferredoxin--NADP reductase (322 aa).

7 residues coordinate FAD: Thr-12, Glu-31, Gln-39, Tyr-44, Ala-86, Phe-119, and Thr-317.

This sequence belongs to the ferredoxin--NADP reductase type 2 family. Homodimer. FAD is required as a cofactor.

It catalyses the reaction 2 reduced [2Fe-2S]-[ferredoxin] + NADP(+) + H(+) = 2 oxidized [2Fe-2S]-[ferredoxin] + NADPH. The sequence is that of Ferredoxin--NADP reductase from Acholeplasma laidlawii (strain PG-8A).